A 144-amino-acid polypeptide reads, in one-letter code: Large ribosomal subunit protein uL13 (144 aa).

The protein belongs to the universal ribosomal protein uL13 family. In terms of assembly, part of the 50S ribosomal subunit.

Functionally, this protein is one of the early assembly proteins of the 50S ribosomal subunit, although it is not seen to bind rRNA by itself. It is important during the early stages of 50S assembly. The chain is Large ribosomal subunit protein uL13 from Natronomonas pharaonis (strain ATCC 35678 / DSM 2160 / CIP 103997 / JCM 8858 / NBRC 14720 / NCIMB 2260 / Gabara) (Halobacterium pharaonis).